A 224-amino-acid polypeptide reads, in one-letter code: DNA mismatch repair protein MutH (224 aa).

This sequence belongs to the MutH family.

The protein resides in the cytoplasm. Functionally, sequence-specific endonuclease that cleaves unmethylated GATC sequences. It is involved in DNA mismatch repair. This Histophilus somni (strain 2336) (Haemophilus somnus) protein is DNA mismatch repair protein MutH.